We begin with the raw amino-acid sequence, 122 residues long: Large ribosomal subunit protein uL14 (122 aa).

Belongs to the universal ribosomal protein uL14 family. As to quaternary structure, part of the 50S ribosomal subunit. Forms a cluster with proteins L3 and L19. In the 70S ribosome, L14 and L19 interact and together make contacts with the 16S rRNA in bridges B5 and B8.

Its function is as follows. Binds to 23S rRNA. Forms part of two intersubunit bridges in the 70S ribosome. The polypeptide is Large ribosomal subunit protein uL14 (Kosmotoga olearia (strain ATCC BAA-1733 / DSM 21960 / TBF 19.5.1)).